Here is a 318-residue protein sequence, read N- to C-terminus: tRNA uridine(34) hydroxylase (318 aa).

One can recognise a Rhodanese domain in the interval 125 to 219; it reads QDPNTVVIDA…YGTSKDTEGK (95 aa). Catalysis depends on Cys-179, which acts as the Cysteine persulfide intermediate.

It belongs to the TrhO family.

The catalysed reaction is uridine(34) in tRNA + AH2 + O2 = 5-hydroxyuridine(34) in tRNA + A + H2O. Its function is as follows. Catalyzes oxygen-dependent 5-hydroxyuridine (ho5U) modification at position 34 in tRNAs. The polypeptide is tRNA uridine(34) hydroxylase (Acholeplasma laidlawii (strain PG-8A)).